The following is a 1305-amino-acid chain: Rho GTPase-activating protein 33 (1305 aa).

The tract at residues 1-64 (MLQAQKQSDP…KPGKRLSAPR (64 aa)) is disordered. S32 carries the post-translational modification Phosphoserine. The PX; atypical domain occupies 83 to 192 (FGHIQLLLSP…CGPVLTWMEL (110 aa)). One can recognise an SH3 domain in the interval 210–272 (PAVAAAHVVK…PSECVELFTE (63 aa)). In terms of domain architecture, Rho-GAP spans 339-534 (CDLGEHLSNS…FLLTHVEVLF (196 aa)). Disordered regions lie at residues 575–818 (RTQG…LDIS), 864–1054 (LSDT…SFFS), and 1115–1305 (SYSG…RSYC). Low complexity predominate over residues 582–595 (TPTEPTTPKTPASP). A Phosphoserine modification is found at S594. Residues 596–608 (VERRKRERAEKQR) are compositionally biased toward basic and acidic residues. Over residues 646–669 (SGSRPDTVTLRSAKSEESLSSQAS) the composition is skewed to polar residues. Position 660 is a phosphoserine (S660). The segment covering 694-733 (APAGSCESLSSSSSSSSSSSSSSSSESSAGGLGPLSGSPS) has biased composition (low complexity). Residue S749 is modified to Phosphoserine. Positions 774 to 786 (PGDPAPPASPAPP) are enriched in pro residues. Residues 787 to 798 (ASASAFPPRATP) are compositionally biased toward low complexity. Over residues 864–873 (LSDTCQQEIS) the composition is skewed to polar residues. Over residues 895-915 (LLPPPLPLLRPGGAPPPPPKN) the composition is skewed to pro residues. Residues 916-940 (PARLMALALAERAQQVAEQQSQQEQ) show a composition bias toward low complexity. Polar residues-rich tracts occupy residues 992-1020 (RQQS…SQVS), 1039-1054 (SPCS…SFFS), and 1115-1125 (SYSGPSRSWSP). Y1188 is subject to Phosphotyrosine. Over residues 1194 to 1208 (GPRGPSPASSSSSSP) the composition is skewed to low complexity. R1263 bears the Omega-N-methylarginine mark. The segment covering 1292–1305 (SWSLHSEGQTRSYC) has biased composition (polar residues).

The protein belongs to the PX domain-containing GAP family. As to quaternary structure, specifically interacts with CDC42 and RHOQ/TC10 through its Rho-GAP domain. Interacts with NEK6. Highly expressed in brain and testis. Also expressed in white adipose tissue (WAT) and muscle at a low level.

The protein resides in the cell membrane. May be involved in several stages of intracellular trafficking. Could play an important role in the regulation of glucose transport by insulin. May act as a downstream effector of RHOQ/TC10 in the regulation of insulin-stimulated glucose transport. The protein is Rho GTPase-activating protein 33 (Arhgap33) of Mus musculus (Mouse).